A 775-amino-acid polypeptide reads, in one-letter code: Transposon TX1 uncharacterized 82 kDa protein (775 aa).

A compositionally biased stretch (basic and acidic residues) spans 1–10; the sequence is MGGNKKESYK. 3 disordered regions span residues 1–46, 256–277, and 535–565; these read MGGN…ASTS, PKGQ…KTSY, and PIQD…TSTV. The segment covering 35 to 46 has biased composition (polar residues); it reads EPMSKSPIASTS. Over residues 539–549 the composition is skewed to basic and acidic residues; the sequence is PADKTAGKDGE.

The chain is Transposon TX1 uncharacterized 82 kDa protein from Xenopus laevis (African clawed frog).